The primary structure comprises 107 residues: Nucleoid-associated protein BAbS19_I00290 (107 aa).

It belongs to the YbaB/EbfC family. As to quaternary structure, homodimer.

It localises to the cytoplasm. The protein localises to the nucleoid. Its function is as follows. Binds to DNA and alters its conformation. May be involved in regulation of gene expression, nucleoid organization and DNA protection. The chain is Nucleoid-associated protein BAbS19_I00290 from Brucella abortus (strain S19).